The primary structure comprises 517 residues: ATP synthase subunit beta (517 aa).

Composition is skewed to low complexity over residues 1–22 (MAKA…AAKA) and 29–42 (AKTA…APKA). The tract at residues 1–42 (MAKAATPKTTAAAEAKPAAAKAPAKKAPAKTAAAKSDAAPKA) is disordered. 195-202 (GGAGVGKT) lines the ATP pocket.

Belongs to the ATPase alpha/beta chains family. F-type ATPases have 2 components, CF(1) - the catalytic core - and CF(0) - the membrane proton channel. CF(1) has five subunits: alpha(3), beta(3), gamma(1), delta(1), epsilon(1). CF(0) has three main subunits: a(1), b(2) and c(9-12). The alpha and beta chains form an alternating ring which encloses part of the gamma chain. CF(1) is attached to CF(0) by a central stalk formed by the gamma and epsilon chains, while a peripheral stalk is formed by the delta and b chains.

The protein localises to the cell inner membrane. It carries out the reaction ATP + H2O + 4 H(+)(in) = ADP + phosphate + 5 H(+)(out). Produces ATP from ADP in the presence of a proton gradient across the membrane. The catalytic sites are hosted primarily by the beta subunits. This Brucella anthropi (strain ATCC 49188 / DSM 6882 / CCUG 24695 / JCM 21032 / LMG 3331 / NBRC 15819 / NCTC 12168 / Alc 37) (Ochrobactrum anthropi) protein is ATP synthase subunit beta.